The sequence spans 464 residues: Delta(5) fatty acid desaturase A (464 aa).

One can recognise a Cytochrome b5 heme-binding domain in the interval 13-90; the sequence is GKQYSWSELA…LKNYEIGYIS (78 aa). Positions 48 and 71 each coordinate heme. Helical transmembrane passes span 125–145 and 153–173; these read AVSI…TYYL and FYLN…FSMH. The Histidine box-1 signature appears at 176–180; it reads HDSCH. The Histidine box-2 motif lies at 212 to 217; it reads HVIGHH. A helical transmembrane segment spans residues 318 to 338; the sequence is FTDLICYFLIAEFVFGWYLTI. Positions 396–400 match the Histidine box-3 motif; it reads QVVHH.

The protein belongs to the fatty acid desaturase type 1 family. Fe cation is required as a cofactor.

The protein localises to the membrane. In terms of biological role, specific for desaturation of the 5 position in C16 and C18 fatty acids. This is Delta(5) fatty acid desaturase A (fadA) from Dictyostelium discoideum (Social amoeba).